The following is a 62-amino-acid chain: Conotoxin Pn-B0151 (62 aa).

Residues 1–22 form the signal peptide; the sequence is MRCLPVFVILLLLIASTPSVDA. The propeptide occupies 23–48; the sequence is LQKTKDDMPLASFHDNVKRILQTLSN.

It belongs to the conotoxin T superfamily. Contains 2 disulfide bonds that can be either 'C1-C3, C2-C4' or 'C1-C4, C2-C3', since these disulfide connectivities have been observed for conotoxins with cysteine framework V (for examples, see AC P0DQQ7 and AC P81755). Expressed by the venom duct.

The protein resides in the secreted. This is Conotoxin Pn-B0151 from Conus pennaceus (Feathered cone).